Here is a 236-residue protein sequence, read N- to C-terminus: Ubiquitin carboxyl-terminal hydrolase YUH1 (236 aa).

The 227-residue stretch at alanine 7 to proline 233 folds into the UCH catalytic domain. Positions proline 10–proline 15 are interaction with ubiquitin. The active-site Nucleophile is the cysteine 90. Positions phenylalanine 149–proline 157 are interaction with ubiquitin. The active-site Proton donor is the histidine 166. Positions asparagine 219–methionine 228 are interaction with ubiquitin.

The protein belongs to the peptidase C12 family.

The enzyme catalyses Thiol-dependent hydrolysis of ester, thioester, amide, peptide and isopeptide bonds formed by the C-terminal Gly of ubiquitin (a 76-residue protein attached to proteins as an intracellular targeting signal).. Its function is as follows. Deubiquitinating enzyme (DUB) that controls levels of cellular ubiquitin through processing of ubiquitin precursors and ubiquitinated proteins. Thiol protease that recognizes and hydrolyzes a peptide bond at the C-terminal glycine of either ubiquitin or RUB1. Preferentially cleaves ubiquitin from peptides and small adducts. This Saccharomyces cerevisiae (strain ATCC 204508 / S288c) (Baker's yeast) protein is Ubiquitin carboxyl-terminal hydrolase YUH1 (YUH1).